Consider the following 524-residue polypeptide: Solute carrier family 35 member F5 (524 aa).

2 consecutive transmembrane segments (helical) span residues 69–89 (MALGIVILLLVDVIWVASSEL) and 101–121 (FFSTFAKTSMFVLYLLGFIIW). Ser-207 bears the Phosphoserine mark. A run of 8 helical transmembrane segments spans residues 244-264 (ISFFFCFVWFLANLSYQEALS), 269-289 (AIVNILSSTSGLFTLILAAVF), 297-317 (FTLSKLLAVILSIGGVVLVNL), 328-348 (TIGSIWSLAGAMFYAVYIVMI), 362-382 (MFFGFVGLFNLLLLWPGFFLL), 396-416 (VVLLCIIINGLIGTVLSEFLW), 421-441 (FLTSSLIGTLALSLTIPLSII), and 453-473 (WLFFAGAIPVFFSFFIVTLLC). The 65-residue stretch at 253 to 317 (FLANLSYQEA…SIGGVVLVNL (65 aa)) folds into the EamA domain.

Belongs to the SLC35F solute transporter family.

The protein localises to the membrane. In terms of biological role, putative solute transporter. This chain is Solute carrier family 35 member F5 (Slc35f5), found in Mus musculus (Mouse).